A 287-amino-acid polypeptide reads, in one-letter code: Oxaloacetate decarboxylase (287 aa).

Residue Ser-50 coordinates substrate. Asp-88 contacts Mg(2+). 2 residues coordinate substrate: Arg-159 and His-235.

This sequence belongs to the isocitrate lyase/PEP mutase superfamily. Oxaloacetate decarboxylase family. As to quaternary structure, homotetramer; dimer of dimers. The cofactor is Mg(2+).

It catalyses the reaction oxaloacetate + H(+) = pyruvate + CO2. In terms of biological role, catalyzes the decarboxylation of oxaloacetate into pyruvate. Seems to play a role in maintaining cellular concentrations of bicarbonate and pyruvate. The polypeptide is Oxaloacetate decarboxylase (Chromohalobacter salexigens (strain ATCC BAA-138 / DSM 3043 / CIP 106854 / NCIMB 13768 / 1H11)).